Reading from the N-terminus, the 910-residue chain is 2-oxoglutarate dehydrogenase E1 component (910 aa).

The protein belongs to the alpha-ketoglutarate dehydrogenase family. In terms of assembly, homodimer. Part of the 2-oxoglutarate dehydrogenase (OGDH) complex composed of E1 (2-oxoglutarate dehydrogenase), E2 (dihydrolipoamide succinyltransferase) and E3 (dihydrolipoamide dehydrogenase); the complex contains multiple copies of the three enzymatic components (E1, E2 and E3). Requires thiamine diphosphate as cofactor.

The catalysed reaction is N(6)-[(R)-lipoyl]-L-lysyl-[protein] + 2-oxoglutarate + H(+) = N(6)-[(R)-S(8)-succinyldihydrolipoyl]-L-lysyl-[protein] + CO2. Functionally, E1 component of the 2-oxoglutarate dehydrogenase (OGDH) complex which catalyzes the decarboxylation of 2-oxoglutarate, the first step in the conversion of 2-oxoglutarate to succinyl-CoA and CO(2). The sequence is that of 2-oxoglutarate dehydrogenase E1 component from Staphylococcus aureus (strain N315).